Here is a 301-residue protein sequence, read N- to C-terminus: Nucleotide-binding protein Helmi_06460 (301 aa).

An ATP-binding site is contributed by 17 to 24 (GLSGAGKS). 68–71 (DIRG) serves as a coordination point for GTP.

Belongs to the RapZ-like family.

In terms of biological role, displays ATPase and GTPase activities. This is Nucleotide-binding protein Helmi_06460 from Heliobacterium modesticaldum (strain ATCC 51547 / Ice1).